The primary structure comprises 423 residues: TNF receptor-associated factor family protein DDB_G0277243 (423 aa).

The RING-type; degenerate zinc-finger motif lies at 20 to 66; it reads CSICVDPVLNSLPLEQHQALSCKNGHLLCQACWGKQLALRKECCICK. 2 TRAF-type zinc fingers span residues 124 to 179 and 180 to 237; these read SHLR…NDMP and THIE…CYLS. Residues 287 to 411 form the MATH domain; sequence RYKGNWTIEN…DGKLTINIDV (125 aa).

It belongs to the TNF receptor-associated factor family. A subfamily.

The protein resides in the cytoplasm. In terms of biological role, probable adapter protein and signal transducer that links members of the tumor necrosis factor receptor family to different signaling pathways by association with the receptor cytoplasmic domain and kinases. In Dictyostelium discoideum (Social amoeba), this protein is TNF receptor-associated factor family protein DDB_G0277243.